The primary structure comprises 384 residues: 1-deoxy-D-xylulose 5-phosphate reductoisomerase (384 aa).

Residues Thr-10, Gly-11, Ser-12, Ile-13, Asn-38, and Asn-120 each coordinate NADPH. Position 121 (Lys-121) interacts with 1-deoxy-D-xylulose 5-phosphate. Glu-122 contacts NADPH. Residue Asp-146 participates in Mn(2+) binding. The 1-deoxy-D-xylulose 5-phosphate site is built by Ser-147, Glu-148, Ser-172, and His-195. Glu-148 is a Mn(2+) binding site. Gly-201 contributes to the NADPH binding site. 1-deoxy-D-xylulose 5-phosphate contacts are provided by Ser-208, Asn-213, Lys-214, and Glu-217. Position 217 (Glu-217) interacts with Mn(2+).

Belongs to the DXR family. The cofactor is Mg(2+). Mn(2+) is required as a cofactor.

It carries out the reaction 2-C-methyl-D-erythritol 4-phosphate + NADP(+) = 1-deoxy-D-xylulose 5-phosphate + NADPH + H(+). The protein operates within isoprenoid biosynthesis; isopentenyl diphosphate biosynthesis via DXP pathway; isopentenyl diphosphate from 1-deoxy-D-xylulose 5-phosphate: step 1/6. Functionally, catalyzes the NADPH-dependent rearrangement and reduction of 1-deoxy-D-xylulose-5-phosphate (DXP) to 2-C-methyl-D-erythritol 4-phosphate (MEP). In Protochlamydia amoebophila (strain UWE25), this protein is 1-deoxy-D-xylulose 5-phosphate reductoisomerase.